A 477-amino-acid polypeptide reads, in one-letter code: Bifunctional enzyme PyrF/PyrE (477 aa).

The segment at Met-1–Ser-273 is OMP decarboxylase. The active-site Proton donor is the Lys-96. The interval Val-274–Glu-477 is orotate phosphoribosyltransferase. 5-phospho-alpha-D-ribose 1-diphosphate-binding positions include Arg-374, Lys-375, Lys-378, His-380, and Asp-400–Ser-408.

It in the N-terminal section; belongs to the OMP decarboxylase family. Type 2 subfamily. The protein in the C-terminal section; belongs to the purine/pyrimidine phosphoribosyltransferase family. It depends on Mg(2+) as a cofactor.

It carries out the reaction orotidine 5'-phosphate + H(+) = UMP + CO2. The enzyme catalyses orotidine 5'-phosphate + diphosphate = orotate + 5-phospho-alpha-D-ribose 1-diphosphate. It participates in pyrimidine metabolism; UMP biosynthesis via de novo pathway; UMP from orotate: step 1/2. The protein operates within pyrimidine metabolism; UMP biosynthesis via de novo pathway; UMP from orotate: step 2/2. Functionally, catalyzes the transfer of a ribosyl phosphate group from 5-phosphoribose 1-diphosphate to orotate, leading to the formation of orotidine monophosphate (OMP). Its function is as follows. Catalyzes the decarboxylation of orotidine monophosphate (OMP) to uridine monophosphate (UMP). The sequence is that of Bifunctional enzyme PyrF/PyrE (pyrFE) from Nostoc sp. (strain PCC 7120 / SAG 25.82 / UTEX 2576).